Consider the following 127-residue polypeptide: Putative pre-16S rRNA nuclease (127 aa).

This sequence belongs to the YqgF nuclease family.

Its subcellular location is the cytoplasm. In terms of biological role, could be a nuclease involved in processing of the 5'-end of pre-16S rRNA. This Campylobacter jejuni subsp. jejuni serotype O:6 (strain 81116 / NCTC 11828) protein is Putative pre-16S rRNA nuclease.